Consider the following 256-residue polypeptide: Pyridoxine 5'-phosphate synthase (256 aa).

Asn-8 and Arg-19 together coordinate 3-amino-2-oxopropyl phosphate. Residue His-44 is the Proton acceptor of the active site. 1-deoxy-D-xylulose 5-phosphate contacts are provided by Arg-46 and His-51. Glu-74 functions as the Proton acceptor in the catalytic mechanism. Thr-111 is a 1-deoxy-D-xylulose 5-phosphate binding site. His-202 acts as the Proton donor in catalysis. 3-amino-2-oxopropyl phosphate is bound by residues Asp-203 and 225–226 (GH).

It belongs to the PNP synthase family. Homooctamer; tetramer of dimers.

It is found in the cytoplasm. It catalyses the reaction 3-amino-2-oxopropyl phosphate + 1-deoxy-D-xylulose 5-phosphate = pyridoxine 5'-phosphate + phosphate + 2 H2O + H(+). It functions in the pathway cofactor biosynthesis; pyridoxine 5'-phosphate biosynthesis; pyridoxine 5'-phosphate from D-erythrose 4-phosphate: step 5/5. Functionally, catalyzes the complicated ring closure reaction between the two acyclic compounds 1-deoxy-D-xylulose-5-phosphate (DXP) and 3-amino-2-oxopropyl phosphate (1-amino-acetone-3-phosphate or AAP) to form pyridoxine 5'-phosphate (PNP) and inorganic phosphate. This chain is Pyridoxine 5'-phosphate synthase, found in Xanthomonas campestris pv. campestris (strain 8004).